A 201-amino-acid chain; its full sequence is Xanthine phosphoribosyltransferase (201 aa).

Positions 20 and 27 each coordinate xanthine. A129–A133 provides a ligand contact to 5-phospho-alpha-D-ribose 1-diphosphate. K157 is a binding site for xanthine.

The protein belongs to the purine/pyrimidine phosphoribosyltransferase family. Xpt subfamily. In terms of assembly, homodimer.

The protein localises to the cytoplasm. It carries out the reaction XMP + diphosphate = xanthine + 5-phospho-alpha-D-ribose 1-diphosphate. It participates in purine metabolism; XMP biosynthesis via salvage pathway; XMP from xanthine: step 1/1. Functionally, converts the preformed base xanthine, a product of nucleic acid breakdown, to xanthosine 5'-monophosphate (XMP), so it can be reused for RNA or DNA synthesis. The sequence is that of Xanthine phosphoribosyltransferase from Shouchella clausii (strain KSM-K16) (Alkalihalobacillus clausii).